The sequence spans 288 residues: ATP synthase gamma chain (288 aa).

This sequence belongs to the ATPase gamma chain family. In terms of assembly, F-type ATPases have 2 components, CF(1) - the catalytic core - and CF(0) - the membrane proton channel. CF(1) has five subunits: alpha(3), beta(3), gamma(1), delta(1), epsilon(1). CF(0) has three main subunits: a, b and c.

The protein resides in the cell inner membrane. In terms of biological role, produces ATP from ADP in the presence of a proton gradient across the membrane. The gamma chain is believed to be important in regulating ATPase activity and the flow of protons through the CF(0) complex. This is ATP synthase gamma chain from Aeromonas hydrophila subsp. hydrophila (strain ATCC 7966 / DSM 30187 / BCRC 13018 / CCUG 14551 / JCM 1027 / KCTC 2358 / NCIMB 9240 / NCTC 8049).